Reading from the N-terminus, the 197-residue chain is Segregation and condensation protein B (197 aa).

This sequence belongs to the ScpB family. In terms of assembly, homodimer. Homodimerization may be required to stabilize the binding of ScpA to the Smc head domains. Component of a cohesin-like complex composed of ScpA, ScpB and the Smc homodimer, in which ScpA and ScpB bind to the head domain of Smc. The presence of the three proteins is required for the association of the complex with DNA.

Its subcellular location is the cytoplasm. Its function is as follows. Participates in chromosomal partition during cell division. May act via the formation of a condensin-like complex containing Smc and ScpA that pull DNA away from mid-cell into both cell halves. In Bacillus pumilus (strain SAFR-032), this protein is Segregation and condensation protein B.